A 161-amino-acid chain; its full sequence is Endoribonuclease YbeY (161 aa).

Residues H120, H124, and D130 each contribute to the Zn(2+) site.

Belongs to the endoribonuclease YbeY family. The cofactor is Zn(2+).

It is found in the cytoplasm. Single strand-specific metallo-endoribonuclease involved in late-stage 70S ribosome quality control and in maturation of the 3' terminus of the 16S rRNA. In Chlamydia muridarum (strain MoPn / Nigg), this protein is Endoribonuclease YbeY.